The following is an 804-amino-acid chain: Endoplasmin (804 aa).

Residues methionine 1–alanine 21 form the signal peptide. Positions serine 42–threonine 44 match the SRT pseudosubstrate motif motif. N-linked (GlcNAc...) asparagine glycosylation occurs at asparagine 62. Serine 64 carries the phosphoserine modification. Residue asparagine 107 is glycosylated (N-linked (GlcNAc...) asparagine). ATP contacts are provided by asparagine 107, aspartate 149, and asparagine 162. Lysine 168 is modified (N6-(2-hydroxyisobutyryl)lysine). Serine 172 is subject to Phosphoserine. Residue phenylalanine 199 coordinates ATP. N-linked (GlcNAc...) asparagine glycosylation is present at asparagine 217. A disordered region spans residues threonine 288–threonine 323. Residues valine 289–glutamate 317 show a composition bias toward acidic residues. A phosphoserine mark is found at serine 306 and serine 403. Lysine 404 is modified (N6-succinyllysine). Asparagine 445 carries an N-linked (GlcNAc...) asparagine glycan. Residue serine 447 is modified to Phosphoserine. Residue lysine 479 is modified to N6-acetyllysine. N-linked (GlcNAc...) asparagine glycosylation is found at asparagine 481 and asparagine 502. Lysine 633 is subject to N6-succinyllysine. The tract at residues aspartate 750–leucine 804 is disordered. Residues aspartate 757–glutamine 791 are compositionally biased toward acidic residues. Threonine 786 carries the post-translational modification Phosphothreonine. Over residues glutamate 792 to leucine 804 the composition is skewed to basic and acidic residues. The Prevents secretion from ER signature appears at lysine 801–leucine 804.

The protein belongs to the heat shock protein 90 family. As to quaternary structure, homodimer; disulfide-linked. Component of an EIF2 complex at least composed of CELF1/CUGBP1, CALR, CALR3, EIF2S1, EIF2S2, HSP90B1 and HSPA5. Part of a large chaperone multiprotein complex comprising DNAJB11, HSP90B1, HSPA5, HYOU, PDIA2, PDIA4, PDIA6, PPIB, SDF2L1, UGGT1 and very small amounts of ERP29, but not, or at very low levels, CALR nor CANX. Interacts with AIMP1; regulates its retention in the endoplasmic reticulum. Hyperglycosylated form interacts with OS9; promoting its degradation by the endoplasmic reticulum associated degradation (ERAD). Interacts with CNPY3. This interaction is disrupted in the presence of ATP. Interacts with TLR4 and TLR9, but not with TLR3. Interacts with MZB1 in a calcium-dependent manner. Interacts with METTL23. Interacts with IL1B; the interaction facilitates cargo translocation into the ERGIC. Interacts with EIF2AK3. Phosphorylated by CK2. In terms of processing, N-glycosylated cotranslationally at Asn-217 by STT3A-containing OST-A complex: this glycosylation is constitutive. In response to various stress, 5 additional facultative sites (Asn-62, Asn-107, Asn-445, Asn-481 and Asn-502) can be glycosylated post-translationally by STT3B-containing OST-B complex, leading to a hyperglycosylated form that is degraded by the ER-associated degradation (ERAD) pathway. In normal conditions, the OST-A complex together with CCDC134 prevent glycosylation at facultative sites during protein folding, thereby preventing hyperglycosylation. Mechanistically, nascent HSP90B1 is tethered during translation to a specialized CCDC134-containing translocon that forms a microenvironment for its folding, in which STT3A associates with the SRT pseudosubstrate motif, and prevents access to facultative glycosylation sites until folding is completed, rendering its facultative sites inaccessible to the OST-B complex.

It localises to the endoplasmic reticulum lumen. It is found in the sarcoplasmic reticulum lumen. The protein resides in the melanosome. The enzyme catalyses ATP + H2O = ADP + phosphate + H(+). Functionally, ATP-dependent chaperone involved in the processing of proteins in the endoplasmic reticulum, regulating their transport. Together with MESD, acts as a modulator of the Wnt pathway by promoting the folding of LRP6, a coreceptor of the canonical Wnt pathway. When associated with CNPY3, required for proper folding of Toll-like receptors. Promotes folding and trafficking of TLR4 to the cell surface. May participate in the unfolding of cytosolic leaderless cargos (lacking the secretion signal sequence) such as the interleukin 1/IL-1 to facilitate their translocation into the ERGIC (endoplasmic reticulum-Golgi intermediate compartment) and secretion; the translocation process is mediated by the cargo receptor TMED10. The sequence is that of Endoplasmin (HSP90B1) from Macaca fascicularis (Crab-eating macaque).